Reading from the N-terminus, the 480-residue chain is RAC-alpha serine/threonine-protein kinase (480 aa).

The PH domain occupies 5-108 (AIVKEGWLHK…WTTAIQTVAD (104 aa)). Residues Lys-14 and Lys-20 each carry the N6-acetyllysine modification. 14 to 19 (KRGEYI) is a binding site for 1D-myo-inositol 1,3,4,5-tetrakisphosphate. Residues 23-25 (RPR) and Asn-53 contribute to the 1D-myo-inositol 1,3,4,5-tetrakisphosphate site. Cysteines 60 and 77 form a disulfide. Arg-86 lines the 1D-myo-inositol 1,3,4,5-tetrakisphosphate pocket. Ser-124 is modified (phosphoserine). Ser-129 carries the post-translational modification Phosphoserine; alternate. The O-linked (GlcNAc) serine; alternate glycan is linked to Ser-129. Residues 150 to 408 (FEYLKLLGKG…AKEIMQHRFF (259 aa)) form the Protein kinase domain. Position 156–164 (156–164 (LGKGTFGKV)) interacts with ATP. Tyr-176 is modified (phosphotyrosine; by TNK2). Lys-179 lines the ATP pocket. The Proton acceptor role is filled by Asp-274. Residue Lys-284 forms a Glycyl lysine isopeptide (Lys-Gly) (interchain with G-Cter in ubiquitin) linkage. A disulfide bridge connects residues Cys-296 and Cys-310. A glycan (O-linked (GlcNAc) threonine) is linked at Thr-305. At Thr-308 the chain carries Phosphothreonine; by PDPK1. The O-linked (GlcNAc) threonine glycan is linked to Thr-312. Residues 409–480 (ASIVWQDVYE…QFSYSASATA (72 aa)) enclose the AGC-kinase C-terminal domain. Residue Thr-448 is modified to Phosphothreonine. Residue Thr-450 is modified to Phosphothreonine; by MTOR. Residues 450–480 (TPPDQDDSMEGVDSERRPHFPQFSYSASATA) form a disordered region. The O-linked (GlcNAc) serine; alternate glycan is linked to Ser-473. A Phosphoserine; by MTOR; alternate modification is found at Ser-473. Tyr-474 carries the phosphotyrosine modification. Ser-477 carries the phosphoserine modification. Phosphothreonine is present on Thr-479.

This sequence belongs to the protein kinase superfamily. AGC Ser/Thr protein kinase family. RAC subfamily. In terms of assembly, interacts (via the C-terminus) with CCDC88A (via its C-terminus) and THEM4 (via its C-terminus). Interacts with AKTIP. Interacts (via PH domain) with MTCP1, TCL1A and TCL1B. Interacts with TRAF6. Interacts with GRB10; the interaction leads to GRB10 phosphorylation thus promoting YWHAE binding. Interacts with RARA; the interaction phosphorylates RARA and represses its transactivation activity. Interacts with MAP3K5 and TNK2. Interacts with BAD, CLK2, PPP2R5B, STK3 and STK4. Interacts (via PH domain) with SIRT1. Interacts with SRPK2 in a phosphorylation-dependent manner. Interacts with RAF1. Interacts with PKN2 (via C-terminal domain); the interaction occurs with the C-terminus cleavage products of PKN2 in apoptotic cells. Interacts with TRIM13; the interaction ubiquitinates AKT1 leading to its proteasomal degradation. Interacts with and phosphorylated by PDPK1. Interacts with BTBD10. Interacts with KCTD20. Interacts with PA2G4. Interacts with PA2G4. Interacts with KIF14; the interaction is detected in the plasma membrane upon INS stimulation and promotes AKT1 phosphorylation. Interacts with FAM83B; activates the PI3K/AKT signaling cascade. Interacts with WDFY2 (via WD repeats 1-3). Forms a complex with WDFY2 and FOXO1. Interacts with FAM168A. Interacts with SYAP1 (via phosphorylated form and BSD domain); this interaction is enhanced in a mTORC2-mediated manner in response to epidermal growth factor (EGF) stimulation and activates AKT1. Interacts with PKHM3. Interacts with FKBP5/FKBP51; promoting interaction between Akt/AKT1 and PHLPP1, thereby enhancing dephosphorylation and subsequent activation of Akt/AKT1. Interacts with TMEM175; leading to formation of the lysoK(GF) complex. Post-translationally, O-GlcNAcylation at Thr-305 and Thr-312 inhibits activating phosphorylation at Thr-308 via disrupting the interaction between AKT1 and PDPK1. O-GlcNAcylation at Ser-473 also probably interferes with phosphorylation at this site. Phosphorylation on Thr-308, Ser-473 and Tyr-474 is required for full activity. Phosphorylation of the activation loop at Thr-308 by PDPK1/PDK1 is a prerequisite for full activation. Phosphorylation by mTORC2 in response to growth factors plays a key role in AKT1 activation: mTORC2 phosphorylates different sites depending on the context, such as Thr-450, Ser-473, Ser-477 or Thr-479, thereby facilitating subsequent phosphorylation of the activation loop by PDPK1/PDK1. Phosphorylation at Ser-473 by mTORC2 promotes ubiquitination and degradation by the proteasome. Also phosphorylated at Ser-477 and Thr-479 by CDK2, facilitating subsequent phosphorylation of the activation loop by PDPK1/PDK1. Activated TNK2 phosphorylates it on Tyr-176 resulting in its binding to the anionic plasma membrane phospholipid PA. This phosphorylated form localizes to the cell membrane, where it is targeted by PDPK1 and PDPK2 for further phosphorylations on Thr-308 and Ser-473 leading to its activation. Phosphorylated at Thr-308 and Ser-473 by IKBKE and TBK1. Ser-473 phosphorylation is enhanced by interaction with AGAP2 isoform 2 (PIKE-A). Ser-473 phosphorylation is enhanced by signaling through activated FLT3. Ser-473 is dephosphorylated by PHLPP. Dephosphorylated at Thr-308 and Ser-473 by PP2A phosphatase. The phosphorylated form of PPP2R5B is required for bridging AKT1 with PP2A phosphatase. Ser-473 is dephosphorylated by CPPED1, leading to termination of signaling. AIM2 acts as an inhibitor of AKT1 by inhibiting phosphorylation Ser-473: AIM2 acts both by inhibiting the activity of PRKDC/DNA-PK kinase and promoting dephosphorylation by PP2A phosphatase. In terms of processing, ubiquitinated; undergoes both 'Lys-48'- and 'Lys-63'-linked polyubiquitination. TRAF6-induced 'Lys-63'-linked AKT1 ubiquitination is critical for phosphorylation and activation. When ubiquitinated, it translocates to the plasma membrane, where it becomes phosphorylated. When fully phosphorylated and translocated into the nucleus, undergoes 'Lys-48'-polyubiquitination catalyzed by TTC3, leading to its degradation by the proteasome. Ubiquitinated via 'Lys-48'-linked polyubiquitination by ZNRF1, leading to its degradation by the proteasome. Also ubiquitinated by TRIM13 leading to its proteasomal degradation. Phosphorylated, undergoes 'Lys-48'-linked polyubiquitination preferentially at Lys-284 catalyzed by MUL1, leading to its proteasomal degradation. Post-translationally, acetylated on Lys-14 and Lys-20 by the histone acetyltransferases EP300 and KAT2B. Acetylation results in reduced phosphorylation and inhibition of activity. Deacetylated at Lys-14 and Lys-20 by SIRT1. SIRT1-mediated deacetylation relieves the inhibition. Cleavage by caspase-3/CASP3. Cleaved at the caspase-3 consensus site Asp-462 during apoptosis, resulting in down-regulation of the AKT signaling pathway and decreased cell survival.

It localises to the cytoplasm. It is found in the nucleus. Its subcellular location is the cell membrane. The protein localises to the mitochondrion intermembrane space. The enzyme catalyses L-seryl-[protein] + ATP = O-phospho-L-seryl-[protein] + ADP + H(+). It carries out the reaction L-threonyl-[protein] + ATP = O-phospho-L-threonyl-[protein] + ADP + H(+). AKT1 is one of 3 closely related serine/threonine-protein kinases (AKT1, AKT2 and AKT3) called the AKT kinase, and which regulate many processes including metabolism, proliferation, cell survival, growth and angiogenesis. This is mediated through serine and/or threonine phosphorylation of a range of downstream substrates. Over 100 substrate candidates have been reported so far, but for most of them, no isoform specificity has been reported. AKT is responsible of the regulation of glucose uptake by mediating insulin-induced translocation of the SLC2A4/GLUT4 glucose transporter to the cell surface. Phosphorylation of PTPN1 at 'Ser-50' negatively modulates its phosphatase activity preventing dephosphorylation of the insulin receptor and the attenuation of insulin signaling. Phosphorylation of TBC1D4 triggers the binding of this effector to inhibitory 14-3-3 proteins, which is required for insulin-stimulated glucose transport. AKT also regulates the storage of glucose in the form of glycogen by phosphorylating GSK3A at 'Ser-21' and GSK3B at 'Ser-9', resulting in inhibition of its kinase activity. Phosphorylation of GSK3 isoforms by AKT is also thought to be one mechanism by which cell proliferation is driven. AKT also regulates cell survival via the phosphorylation of MAP3K5 (apoptosis signal-related kinase). Phosphorylation of 'Ser-83' decreases MAP3K5 kinase activity stimulated by oxidative stress and thereby prevents apoptosis. AKT mediates insulin-stimulated protein synthesis by phosphorylating TSC2 at 'Ser-939' and 'Thr-1462', thereby activating the mTORC1 signaling pathway, and leading to both phosphorylation of 4E-BP1 and in activation of RPS6KB1. Also regulates the mTORC1 signaling pathway by catalyzing phosphorylation of CASTOR1 and DEPDC5. AKT plays a role as key modulator of the AKT-mTOR signaling pathway controlling the tempo of the process of newborn neurons integration during adult neurogenesis, including correct neuron positioning, dendritic development and synapse formation. Part of a positive feedback loop of mTORC2 signaling by mediating phosphorylation of MAPKAP1/SIN1, promoting mTORC2 activation. AKT is involved in the phosphorylation of members of the FOXO factors (Forkhead family of transcription factors), leading to binding of 14-3-3 proteins and cytoplasmic localization. In particular, FOXO1 is phosphorylated at 'Thr-24', 'Ser-256' and 'Ser-319'. FOXO3 and FOXO4 are phosphorylated on equivalent sites. AKT has an important role in the regulation of NF-kappa-B-dependent gene transcription and positively regulates the activity of CREB1 (cyclic AMP (cAMP)-response element binding protein). The phosphorylation of CREB1 induces the binding of accessory proteins that are necessary for the transcription of pro-survival genes such as BCL2 and MCL1. AKT phosphorylates 'Ser-454' on ATP citrate lyase (ACLY), thereby potentially regulating ACLY activity and fatty acid synthesis. Activates the 3B isoform of cyclic nucleotide phosphodiesterase (PDE3B) via phosphorylation of 'Ser-273', resulting in reduced cyclic AMP levels and inhibition of lipolysis. Phosphorylates PIKFYVE on 'Ser-318', which results in increased PI(3)P-5 activity. The Rho GTPase-activating protein DLC1 is another substrate and its phosphorylation is implicated in the regulation cell proliferation and cell growth. Signals downstream of phosphatidylinositol 3-kinase (PI(3)K) to mediate the effects of various growth factors such as platelet-derived growth factor (PDGF), epidermal growth factor (EGF), insulin and insulin-like growth factor 1 (IGF1). AKT mediates the antiapoptotic effects of IGF1. Essential for the SPATA13-mediated regulation of cell migration and adhesion assembly and disassembly. May be involved in the regulation of the placental development. Phosphorylates STK4/MST1 at 'Thr-120' and 'Thr-387' leading to inhibition of its: kinase activity, nuclear translocation, autophosphorylation and ability to phosphorylate FOXO3. Phosphorylates STK3/MST2 at 'Thr-117' and 'Thr-384' leading to inhibition of its: cleavage, kinase activity, autophosphorylation at Thr-180, binding to RASSF1 and nuclear translocation. Phosphorylates SRPK2 and enhances its kinase activity towards SRSF2 and ACIN1 and promotes its nuclear translocation. Phosphorylates RAF1 at 'Ser-259' and negatively regulates its activity. Phosphorylation of BAD stimulates its pro-apoptotic activity. Phosphorylates KAT6A at 'Thr-369' and this phosphorylation inhibits the interaction of KAT6A with PML and negatively regulates its acetylation activity towards p53/TP53. Phosphorylates palladin (PALLD), modulating cytoskeletal organization and cell motility. Phosphorylates prohibitin (PHB), playing an important role in cell metabolism and proliferation. Phosphorylates CDKN1A, for which phosphorylation at 'Thr-145' induces its release from CDK2 and cytoplasmic relocalization. These recent findings indicate that the AKT1 isoform has a more specific role in cell motility and proliferation. Phosphorylates CLK2 thereby controlling cell survival to ionizing radiation. Phosphorylates PCK1 at 'Ser-90', reducing the binding affinity of PCK1 to oxaloacetate and changing PCK1 into an atypical protein kinase activity using GTP as donor. Also acts as an activator of TMEM175 potassium channel activity in response to growth factors: forms the lysoK(GF) complex together with TMEM175 and acts by promoting TMEM175 channel activation, independently of its protein kinase activity. Acts as a negative regulator of the cGAS-STING pathway by mediating phosphorylation of CGAS during mitosis, leading to its inhibition. Acts as a regulator of mitochondrial calcium uptake by mediating phosphorylation of MICU1 in the mitochondrial intermembrane space, impairing MICU1 maturation. Acts as an inhibitor of tRNA methylation by mediating phosphorylation of the N-terminus of METTL1, thereby inhibiting METTL1 methyltransferase activity. In response to LPAR1 receptor pathway activation, phosphorylates Rabin8/RAB3IP which alters its activity and phosphorylates WDR44 which induces WDR44 binding to Rab11, thereby switching Rab11 vesicular function from preciliary trafficking to endocytic recycling. The protein is RAC-alpha serine/threonine-protein kinase (AKT1) of Bos taurus (Bovine).